The sequence spans 545 residues: Membrane protein insertase YidC (545 aa).

4 helical membrane passes run 350-370, 424-444, 461-481, and 498-518; these read IIGNWGWAIIVLTIIVKAVLY, LPMLLQIPVFIGLYWALFASV, ADPYYILPIIMAATMFAQTYL, and PLVFSVMFFFFPAGLVLYWVV.

It belongs to the OXA1/ALB3/YidC family. Type 1 subfamily. As to quaternary structure, interacts with the Sec translocase complex via SecD. Specifically interacts with transmembrane segments of nascent integral membrane proteins during membrane integration.

It is found in the cell inner membrane. Required for the insertion and/or proper folding and/or complex formation of integral membrane proteins into the membrane. Involved in integration of membrane proteins that insert both dependently and independently of the Sec translocase complex, as well as at least some lipoproteins. Aids folding of multispanning membrane proteins. This is Membrane protein insertase YidC from Neisseria meningitidis serogroup C (strain 053442).